Here is a 71-residue protein sequence, read N- to C-terminus: Alpha-cobratoxin (71 aa).

5 disulfide bridges follow: Cys3-Cys20, Cys14-Cys41, Cys26-Cys30, Cys45-Cys56, and Cys57-Cys62.

This sequence belongs to the three-finger toxin family. Long-chain subfamily. Type II alpha-neurotoxin sub-subfamily. As to quaternary structure, monomer, homo- or heterodimer with cytotoxins 1 (P60305), 2 (AC P01445), and 3 (AC P01446); disulfide-linked. Post-translationally, in homodimer alpha-cobratoxin, selective reduction of Cys(26)-Cys(30) in one subunit does not affect the activity against the alpha-7/CHRNA7 nAChR, whereas its reduction in both subunits almost prevents alpha-7/CHRNA7 nAChR recognition. On the contrary, reduction of one or both Cys(26)-Cys(30) disulfide bonds in the homodimer considerably potentiates inhibition of the alpha-3-beta-2/CHRNA3-CHRNB2 nAChR by the toxin. In terms of tissue distribution, expressed by the venom gland.

The protein localises to the secreted. Monomer: binds with high affinity to muscular (alpha-1-beta-1-gamma-delta/CHRNA1-CHRNB1-CHRNG-CHRND) nAChR (tested on Torpedo californica, Kd=0.2-4.5 nM) and neuronal alpha-7/CHRNA7 nicotinic acetylcholine receptors (Kd=13-105 nM). Also inhibits GABA(A) channels. Heteropentamer targets studied are composed of alpha-1-beta-3-gamma-2 (GABRA1-GABRB3-GABRG2) subunits (IC(50)=236 nM), alpha-1-beta-2-gamma-2 (GABRA1-GABRB2-GABRG2) subunits (IC(50)=469 nM), alpha-2-beta-2-gamma-2 (GABRA2-GABRB2-GABRG2) subunits (IC(50)=485 nM), alpha-5-beta-3-gamma-2 (GABRA5-GABRB3-GABRG2) subunits (IC(50)=635 nM), and alpha-2-beta-3-gamma-2 (GABRA2-GABRB3-GABRG2) subunits (IC(50)=1099 nM) (activated by 10 uM GABA). Functionally, homodimer: binds with high affinity (but lower than the monomeric form) to muscular (IC(50)=9.7 nM) and with low affinity to neuronal alpha-7/CHRNA7 nAChRs (IC(50)=1370 nM). However, it acquires (compared to the monomeric form) the capacity to block alpha-3/beta-2 (CHRNA3/CHRNB2) nAChRs. In terms of biological role, heterodimer with cytotoxin 3 (AC P01446): is slightly more active than the homodimer in inhibiting alpha-7/CHRNA7 nAChR and is considerably more active in blocking the alpha-3-beta-2/CHRNA3-CHRNB2 nAChR. In Naja kaouthia (Monocled cobra), this protein is Alpha-cobratoxin.